A 308-amino-acid chain; its full sequence is tRNA dimethylallyltransferase (308 aa).

Position 10-17 (10-17 (GPTASGKT)) interacts with ATP. 12–17 (TASGKT) is a substrate binding site. 2 interaction with substrate tRNA regions span residues 35 to 38 (DSSL) and 159 to 163 (QRIFR).

The protein belongs to the IPP transferase family. Monomer. The cofactor is Mg(2+).

It catalyses the reaction adenosine(37) in tRNA + dimethylallyl diphosphate = N(6)-dimethylallyladenosine(37) in tRNA + diphosphate. In terms of biological role, catalyzes the transfer of a dimethylallyl group onto the adenine at position 37 in tRNAs that read codons beginning with uridine, leading to the formation of N6-(dimethylallyl)adenosine (i(6)A). In Francisella tularensis subsp. novicida (strain U112), this protein is tRNA dimethylallyltransferase.